The primary structure comprises 495 residues: Phenylalanine--tRNA ligase alpha subunit (495 aa).

L-phenylalanine contacts are provided by residues threonine 338, glutamine 377–glutamate 379, and tyrosine 417. Mg(2+) is bound at residue glutamate 419. Phenylalanine 442 provides a ligand contact to L-phenylalanine.

This sequence belongs to the class-II aminoacyl-tRNA synthetase family. Phe-tRNA synthetase alpha subunit type 2 subfamily. Tetramer of two alpha and two beta subunits. The cofactor is Mg(2+).

Its subcellular location is the cytoplasm. The enzyme catalyses tRNA(Phe) + L-phenylalanine + ATP = L-phenylalanyl-tRNA(Phe) + AMP + diphosphate + H(+). The polypeptide is Phenylalanine--tRNA ligase alpha subunit (Methanosarcina mazei (strain ATCC BAA-159 / DSM 3647 / Goe1 / Go1 / JCM 11833 / OCM 88) (Methanosarcina frisia)).